A 268-amino-acid polypeptide reads, in one-letter code: Type III pantothenate kinase 1 (268 aa).

6 to 13 (DIGNTNIT) serves as a coordination point for ATP. Substrate is bound by residues Tyr-100 and 107 to 110 (GTDR). The Proton acceptor role is filled by Asp-109. K(+) is bound at residue Asp-133. Residue Thr-136 coordinates ATP.

The protein belongs to the type III pantothenate kinase family. Homodimer. It depends on NH4(+) as a cofactor. Requires K(+) as cofactor.

It is found in the cytoplasm. It catalyses the reaction (R)-pantothenate + ATP = (R)-4'-phosphopantothenate + ADP + H(+). Its pathway is cofactor biosynthesis; coenzyme A biosynthesis; CoA from (R)-pantothenate: step 1/5. Catalyzes the phosphorylation of pantothenate (Pan), the first step in CoA biosynthesis. The protein is Type III pantothenate kinase 1 of Symbiobacterium thermophilum (strain DSM 24528 / JCM 14929 / IAM 14863 / T).